Consider the following 507-residue polypeptide: Glucose-6-phosphate 1-dehydrogenase (507 aa).

Positions 57 and 168 each coordinate NADP(+). Substrate-binding residues include His-198, Lys-202, Glu-236, and Asp-255. The active-site Proton acceptor is His-260. Lys-356 provides a ligand contact to substrate.

This sequence belongs to the glucose-6-phosphate dehydrogenase family.

It carries out the reaction D-glucose 6-phosphate + NADP(+) = 6-phospho-D-glucono-1,5-lactone + NADPH + H(+). Its pathway is carbohydrate degradation; pentose phosphate pathway; D-ribulose 5-phosphate from D-glucose 6-phosphate (oxidative stage): step 1/3. Its function is as follows. Catalyzes the oxidation of glucose 6-phosphate to 6-phosphogluconolactone. This is Glucose-6-phosphate 1-dehydrogenase from Chlamydia muridarum (strain MoPn / Nigg).